Reading from the N-terminus, the 237-residue chain is Uridylate kinase (237 aa).

Lysine 11 to glycine 14 serves as a coordination point for ATP. Glycine 53 contributes to the UMP binding site. 2 residues coordinate ATP: glycine 54 and arginine 58. UMP is bound by residues aspartate 73 and threonine 134–threonine 141. Residues threonine 161, tyrosine 167, and aspartate 170 each coordinate ATP.

Belongs to the UMP kinase family. Homohexamer.

The protein resides in the cytoplasm. It catalyses the reaction UMP + ATP = UDP + ADP. Its pathway is pyrimidine metabolism; CTP biosynthesis via de novo pathway; UDP from UMP (UMPK route): step 1/1. Its activity is regulated as follows. Inhibited by UTP. Catalyzes the reversible phosphorylation of UMP to UDP. The sequence is that of Uridylate kinase from Burkholderia thailandensis (strain ATCC 700388 / DSM 13276 / CCUG 48851 / CIP 106301 / E264).